The primary structure comprises 258 residues: MSNLNVERVLSVHHWNDTLFSFKTTRNPSLRFENGQFVMIGLEVDGRPLMRAYSIASPNYEEHLEFFSIKVQNGPLTSRLQHLKEGDELMVSRKPTGTLVTSDLLPGKHLYMLSTGTGLAPFMSLIQDPEVYERFEKVVLIHGVRQVNELAYQQFITEHLPQSEYFGEAVKEKLIYYPTVTRESFHNQGRLTDLMRSGKLFEDIGLPPINPQDDRAMICGSPSMLDESCEVLDGFGLKISPRMGEPGDYLIERAFVEK.

The FAD-binding FR-type domain maps to 2–102; that stretch reads SNLNVERVLS…RKPTGTLVTS (101 aa). Asp17 provides a ligand contact to NADP(+). Residues 51-54, 67-69, 74-77, and Thr117 contribute to the FAD site; these read RAYS, FSI, and GPLT. NADP(+) is bound by residues 144 to 145, 181 to 182, and Arg190; these read VR and TR. Position 254 to 258 (254 to 258) interacts with FAD; the sequence is AFVEK.

This sequence belongs to the ferredoxin--NADP reductase type 1 family. Monomer. FAD serves as cofactor.

The catalysed reaction is 2 reduced [2Fe-2S]-[ferredoxin] + NADP(+) + H(+) = 2 oxidized [2Fe-2S]-[ferredoxin] + NADPH. In terms of biological role, transports electrons between ferredoxin and NADPH. The chain is Ferredoxin--NADP reductase from Azotobacter vinelandii.